A 75-amino-acid polypeptide reads, in one-letter code: UPF0346 protein OB1736 (75 aa).

The protein belongs to the UPF0346 family.

The chain is UPF0346 protein OB1736 from Oceanobacillus iheyensis (strain DSM 14371 / CIP 107618 / JCM 11309 / KCTC 3954 / HTE831).